We begin with the raw amino-acid sequence, 161 residues long: N5-carboxyaminoimidazole ribonucleotide mutase (161 aa).

3 residues coordinate substrate: Ser9, Asp12, and Arg39.

Belongs to the AIR carboxylase family. Class I subfamily.

It catalyses the reaction 5-carboxyamino-1-(5-phospho-D-ribosyl)imidazole + H(+) = 5-amino-1-(5-phospho-D-ribosyl)imidazole-4-carboxylate. Its pathway is purine metabolism; IMP biosynthesis via de novo pathway; 5-amino-1-(5-phospho-D-ribosyl)imidazole-4-carboxylate from 5-amino-1-(5-phospho-D-ribosyl)imidazole (N5-CAIR route): step 2/2. Functionally, catalyzes the conversion of N5-carboxyaminoimidazole ribonucleotide (N5-CAIR) to 4-carboxy-5-aminoimidazole ribonucleotide (CAIR). This Aliivibrio fischeri (strain ATCC 700601 / ES114) (Vibrio fischeri) protein is N5-carboxyaminoimidazole ribonucleotide mutase.